The following is a 95-amino-acid chain: Protein TusB (95 aa).

The protein belongs to the DsrH/TusB family. As to quaternary structure, heterohexamer, formed by a dimer of trimers. The hexameric TusBCD complex contains 2 copies each of TusB, TusC and TusD. The TusBCD complex interacts with TusE.

It is found in the cytoplasm. Functionally, part of a sulfur-relay system required for 2-thiolation of 5-methylaminomethyl-2-thiouridine (mnm(5)s(2)U) at tRNA wobble positions. This chain is Protein TusB, found in Shigella sonnei (strain Ss046).